Here is a 717-residue protein sequence, read N- to C-terminus: uncharacterized protein (717 aa).

The protein belongs to the asfivirus C717R family.

The protein localises to the virion. This is an uncharacterized protein from Ornithodoros (relapsing fever ticks).